We begin with the raw amino-acid sequence, 900 residues long: Minor teichoic acid biosynthesis protein GgaB (900 aa).

This sequence belongs to the glycosyltransferase 2 family.

It functions in the pathway cell wall biogenesis; poly(glucopyranosyl N-acetylgalactosamine 1-phosphate) teichoic acid biosynthesis. In terms of biological role, involved in the biosynthesis of galactosamine-containing minor teichoic acid, a non-essential cell wall polymer in B.subtilis 168. The chain is Minor teichoic acid biosynthesis protein GgaB (ggaB) from Bacillus subtilis (strain 168).